Reading from the N-terminus, the 120-residue chain is NAD(P)H-quinone oxidoreductase subunit 3, chloroplastic (120 aa).

3 helical membrane passes run 7 to 27 (YNYF…AFSI), 64 to 84 (MFAL…PWAM), and 89 to 109 (LGIP…IGLI).

This sequence belongs to the complex I subunit 3 family. NDH is composed of at least 16 different subunits, 5 of which are encoded in the nucleus.

It localises to the plastid. It is found in the chloroplast thylakoid membrane. The enzyme catalyses a plastoquinone + NADH + (n+1) H(+)(in) = a plastoquinol + NAD(+) + n H(+)(out). The catalysed reaction is a plastoquinone + NADPH + (n+1) H(+)(in) = a plastoquinol + NADP(+) + n H(+)(out). Its function is as follows. NDH shuttles electrons from NAD(P)H:plastoquinone, via FMN and iron-sulfur (Fe-S) centers, to quinones in the photosynthetic chain and possibly in a chloroplast respiratory chain. The immediate electron acceptor for the enzyme in this species is believed to be plastoquinone. Couples the redox reaction to proton translocation, and thus conserves the redox energy in a proton gradient. The chain is NAD(P)H-quinone oxidoreductase subunit 3, chloroplastic from Anthoceros angustus (Hornwort).